The chain runs to 139 residues: uncharacterized protein (139 aa).

A helical transmembrane segment spans residues 77-97; the sequence is YCFFFFLVLFLNGIIATRGKA.

The protein resides in the mitochondrion membrane. This is an uncharacterized protein from Arabidopsis thaliana (Mouse-ear cress).